A 618-amino-acid chain; its full sequence is 1-aminocyclopropane-1-carboxylate synthase-like protein 1 (618 aa).

The span at 11–26 shows a compositional bias: low complexity; it reads QGTQTPAAQTTCAPST. The disordered stretch occupies residues 11 to 54; it reads QGTQTPAAQTTCAPSTMSSSSRPPLETLQAQSVSADETPGSALP. Positions 27–45 are enriched in polar residues; sequence MSSSSRPPLETLQAQSVSA. Glutamate 122 contributes to the substrate binding site. The residue at position 340 (lysine 340) is an N6-(pyridoxal phosphate)lysine.

This sequence belongs to the class-I pyridoxal-phosphate-dependent aminotransferase family.

This is 1-aminocyclopropane-1-carboxylate synthase-like protein 1 (accs) from Takifugu rubripes (Japanese pufferfish).